Here is a 495-residue protein sequence, read N- to C-terminus: RNA-binding KH domain-containing protein PEPPER (495 aa).

KH domains are found at residues 73–140 (DCVF…MDAV), 165–234 (FSSV…LEAI), and 340–403 (QVSQ…EQLI). Residues 474-495 (GQTYGSEYRPASDVGGYSSYNL) are disordered.

In terms of assembly, interacts with HUA1 and HEN4. Detected in roots, shoots, leaves, flowers and fruits.

Its subcellular location is the nucleus. Functionally, regulates vegetative and gynoecium development. In concert with HUA2, antagonizes FLK by positively regulating FLC probably at transcriptional and post-transcriptional levels, and thus acts as a negative regulator of flowering. In Arabidopsis thaliana (Mouse-ear cress), this protein is RNA-binding KH domain-containing protein PEPPER.